A 72-amino-acid polypeptide reads, in one-letter code: Large ribosomal subunit protein uL29 (72 aa).

This sequence belongs to the universal ribosomal protein uL29 family.

This is Large ribosomal subunit protein uL29 from Thermodesulfovibrio yellowstonii (strain ATCC 51303 / DSM 11347 / YP87).